The sequence spans 314 residues: Melanoma-associated antigen 12 (314 aa).

Residues 1–14 are compositionally biased toward basic and acidic residues; sequence MPLEQRSQHCKPEE. A disordered region spans residues 1-72; the sequence is MPLEQRSQHC…HSPQGASTLP (72 aa). A compositionally biased stretch (low complexity) spans 17–44; that stretch reads EAQGEALGLVGAQAPATEEQETASSSST. In terms of domain architecture, MAGE spans 109-308; that stretch reads LSRKMAELVH…ISYPPLHEWA (200 aa).

As to expression, expressed in many tumors of several types, such as melanoma, head and neck squamous cell carcinoma, lung carcinoma and breast carcinoma, but not in normal tissues except for testes.

Functionally, not known, though may play a role tumor transformation or progression. In vitro promotes cell viability in melanoma cell lines. This chain is Melanoma-associated antigen 12 (MAGEA12), found in Homo sapiens (Human).